A 273-amino-acid chain; its full sequence is HMP-PP phosphatase (273 aa).

D8 acts as the Nucleophile in catalysis. D8, D10, and D212 together coordinate Mg(2+).

It belongs to the HAD-like hydrolase superfamily. Cof family. Mg(2+) is required as a cofactor.

The enzyme catalyses 4-amino-2-methyl-5-(diphosphooxymethyl)pyrimidine + H2O = 4-amino-2-methyl-5-(phosphooxymethyl)pyrimidine + phosphate + H(+). Functionally, catalyzes the hydrolysis of 4-amino-2-methyl-5-hydroxymethylpyrimidine pyrophosphate (HMP-PP) to 4-amino-2-methyl-5-hydroxymethylpyrimidine phosphate (HMP-P). In Yersinia pseudotuberculosis serotype IB (strain PB1/+), this protein is HMP-PP phosphatase.